We begin with the raw amino-acid sequence, 122 residues long: Large ribosomal subunit protein uL14 (122 aa).

It belongs to the universal ribosomal protein uL14 family. In terms of assembly, part of the 50S ribosomal subunit. Forms a cluster with proteins L3 and L19. In the 70S ribosome, L14 and L19 interact and together make contacts with the 16S rRNA in bridges B5 and B8.

Binds to 23S rRNA. Forms part of two intersubunit bridges in the 70S ribosome. In Desulfovibrio desulfuricans (strain ATCC 27774 / DSM 6949 / MB), this protein is Large ribosomal subunit protein uL14.